The primary structure comprises 464 residues: F-box/FBD/LRR-repeat protein At1g80470 (464 aa).

The F-box domain maps to 15–62 (DWISGLADDLLLQILSKVPTRESVFTSRMSKRWRNLWRHVPALDLDSS). LRR repeat units follow at residues 96-122 (EEHC…TILS), 123-150 (KVNI…TLYS), 152-178 (VFDA…KFDG), 197-222 (IITH…KLES), 223-249 (MRED…SITD), and 273-298 (DAED…TISA). In terms of domain architecture, FBD spans 359-413 (KEEINLSLVPHCFESSLEYVQLKVPITVSETSSKMELAIYFVRNCSVLKKLMLNE).

The polypeptide is F-box/FBD/LRR-repeat protein At1g80470 (Arabidopsis thaliana (Mouse-ear cress)).